Consider the following 673-residue polypeptide: MASPAPPAAEELPGPAARRLYSRMEASCLELALEGERLCKAGDFKAGVAFFEAAVQVGTEDLKTLSAIYSQLGNAYFYLKEYARALQFHKHDLLLARTIGDRMGEAKASGNLGNTLKVLGRFDEAIVCCQRHLDIAQEQGDKVGEARALYNIGNVYHAKGKQLSWNAAQDPGHLPPDVRETLHRASEFYERNLSLVKELGDRAAQGRAYGNLGNTHYLLGNFTEATTFHKERLAIAKEFGDKAAERRAYSNLGNAHIFLGRFDVAAEHYKKTLQLSRQIRDQAVEAQACYSLGNTYTLLQDYERAAEYHLRHLVIAQELADRVGEGRACWSLGNAYVSMGSPAQALTFAKKHLQISQEIGDRNGELTARMNIAHLQLALGRLTSPAAAEKPDLAGYEAQGARPKRTQRLSAETWDLLRLPLDREQNGETHHTGDWRGPSRDSLPLPMRSRKYQEGPDAIERRPREGSHSPLDSADVRVQVPRTGIPRAPSSDEECFFDLLSKFQSSRMDDQRCPLEEGQAGAAEATAAPTLEERAAQPSVTASPQTEEFFDLIASSQSRRLDDQRASVGSLPGLRITLNNVGHLRGDGDPQEPGDEFFNMLIKYQSSRIDDQRCPPPDVLPRGPTMPDEDFFSLIQRVQAKRMDEQRVDLAGSPDQEASGLPDPRQQCPPGAS.

The segment at 1-507 is mediates association with membranes; it reads MASPAPPAAE…DLLSKFQSSR (507 aa). TPR repeat units follow at residues 28 to 61, 66 to 99, 106 to 139, 146 to 178, 180 to 199, 206 to 239, 246 to 279, 286 to 319, and 326 to 359; these read CLEL…GTED, SAIY…ARTI, AKAS…AQEQ, ARAL…PPDV, ETLH…VKEL, GRAY…AKEF, RRAY…SRQI, AQAC…AQEL, and GRAC…SQEI. The interaction with STK11/LKB1 stretch occupies residues 361–485; the sequence is DRNGELTARM…VRVQVPRTGI (125 aa). Residue S410 is modified to Phosphoserine. R418 is modified (omega-N-methylarginine). Residues 420–439 show a composition bias toward basic and acidic residues; that stretch reads PLDREQNGETHHTGDWRGPS. Residues 420–477 are disordered; that stretch reads PLDREQNGETHHTGDWRGPSRDSLPLPMRSRKYQEGPDAIERRPREGSHSPLDSADVR. Residues S442, S467, S469, S490, and S491 each carry the phosphoserine modification. Basic and acidic residues predominate over residues 451 to 467; the sequence is KYQEGPDAIERRPREGS. One can recognise a GoLoco 1 domain in the interval 493–515; it reads EECFFDLLSKFQSSRMDDQRCPL. The interval 510-544 is disordered; it reads DQRCPLEEGQAGAAEATAAPTLEERAAQPSVTASP. Over residues 516 to 530 the composition is skewed to low complexity; the sequence is EEGQAGAAEATAAPT. Phosphoserine is present on residues S543 and S567. 3 consecutive GoLoco domains span residues 546–568, 594–616, and 628–650; these read TEEF…RASV, GDEF…RCPP, and DEDF…RVDL. Disordered regions lie at residues 609 to 628 and 645 to 673; these read IDDQ…TMPD and EQRV…PGAS. Phosphoserine is present on S653.

It belongs to the GPSM family. Interacts with INSC/inscuteable and FRMPD1. Interacts with GNAI1, GNAI2 and GNAI3 preferentially in their GDP-bound state. May also interact with GNAO1. Interacts with STK11/LKB1 and MACF1. Post-translationally, phosphorylation regulates interaction with G(i/o) alpha. Isoform 4 is specifically expressed in brain by neurons and also detected in testis, liver, kidney, heart and pancreas (at protein level). Highly expressed in cerebellum and subventricular zone-olfactory bulb system. Isoform 2 and isoform 3 are specifically expressed in heart and are also detected in brain.

It is found in the endoplasmic reticulum membrane. Its subcellular location is the golgi apparatus membrane. The protein resides in the cell membrane. The protein localises to the cytoplasm. It localises to the cytosol. Guanine nucleotide dissociation inhibitor (GDI) which functions as a receptor-independent activator of heterotrimeric G-protein signaling. Keeps G(i/o) alpha subunit in its GDP-bound form thus uncoupling heterotrimeric G-proteins signaling from G protein-coupled receptors. Controls spindle orientation and asymmetric cell fate of cerebral cortical progenitors. May also be involved in macroautophagy in intestinal cells. May play a role in drug addiction. This is G-protein-signaling modulator 1 (Gpsm1) from Rattus norvegicus (Rat).